We begin with the raw amino-acid sequence, 379 residues long: MNNRKPLQLSLLVASLAVAFTASATNADAHPPLAPLPPVPVPKDNPQSAEKIALGKQLFWDYRLSGDGSMPCVSCHLPALGWGDGGQISRGYPGTKHWRNSQTILNSAYYNKLFWEGSVNSLEEQAPSAAEGAVAGNGDPSVMEMRLRFVPEYVDAFKNVFGSQWPRMNDAYRAIASYQRTVVSDASKVPFDRYANGDKNALDTSQKRGMALFNGKAGCVQCHNGPLASDQKYYDLGLPDFAGFVDDPLYQVTHRWEHYQKGVSEPRYRAANMDYGLYYVTKNPKDVGKFRTPSLREAKYTAPYMHNGVFTSLQEVVDFYDRGGGSGTSKSELLKPLKLAAQEKQDLIAFIEALSMSEPLLHDDPTLPGEYQPLPAPIK.

The N-terminal stretch at M1–A24 is a signal peptide. 2 consecutive Cytochrome c domains span residues E50–K158 and T204–S355. C72, C75, H76, C219, C222, and H223 together coordinate heme c.

In terms of assembly, the iodate reductase (Idr) complex is composed of a molybdopterin-dependent iodate reductase (IdrA and IdrB subunits) and two associated peroxidases (IdrP1 and IdrP2). The cofactor is heme c.

The protein localises to the periplasm. The catalysed reaction is 2 Fe(II)-[cytochrome c] + H2O2 + 2 H(+) = 2 Fe(III)-[cytochrome c] + 2 H2O. In terms of biological role, involved in iodate respiration. Probably reduces the H(2)O(2) produced by IdrA/IdrB to H(2)O, using a reduced cytochrome c as the electron donor. This is Cytochrome-c peroxidase IdrP1 from Pseudomonas sp. (strain SCT).